A 396-amino-acid polypeptide reads, in one-letter code: Putative ribosomal RNA large subunit methyltransferase YwbD (396 aa).

The 79-residue stretch at 1–79 (MKLLTLKKAH…KHEQIDQAFF (79 aa)) folds into the PUA domain.

It belongs to the methyltransferase superfamily. RlmI family.

It is found in the cytoplasm. The protein is Putative ribosomal RNA large subunit methyltransferase YwbD (ywbD) of Bacillus subtilis (strain 168).